The sequence spans 72 residues: Translation initiation factor IF-1 (72 aa).

An S1-like domain is found at 1–72; sequence MAKEDVIEVE…NRGRIVYRYK (72 aa).

The protein belongs to the IF-1 family. Component of the 30S ribosomal translation pre-initiation complex which assembles on the 30S ribosome in the order IF-2 and IF-3, IF-1 and N-formylmethionyl-tRNA(fMet); mRNA recruitment can occur at any time during PIC assembly.

It is found in the cytoplasm. One of the essential components for the initiation of protein synthesis. Stabilizes the binding of IF-2 and IF-3 on the 30S subunit to which N-formylmethionyl-tRNA(fMet) subsequently binds. Helps modulate mRNA selection, yielding the 30S pre-initiation complex (PIC). Upon addition of the 50S ribosomal subunit IF-1, IF-2 and IF-3 are released leaving the mature 70S translation initiation complex. This chain is Translation initiation factor IF-1, found in Moorella thermoacetica (strain ATCC 39073 / JCM 9320).